Here is a 65-residue protein sequence, read N- to C-terminus: Large ribosomal subunit protein bL35 (65 aa).

The segment covering 1-11 has biased composition (basic residues); it reads MPKIKTRRSAA. Disordered regions lie at residues 1–24 and 41–65; these read MPKI…KFKR and RMRL…MPYA.

The protein belongs to the bacterial ribosomal protein bL35 family.

This chain is Large ribosomal subunit protein bL35, found in Nitratidesulfovibrio vulgaris (strain DSM 19637 / Miyazaki F) (Desulfovibrio vulgaris).